The following is a 1155-amino-acid chain: MSDAEEAPREATRENGETEMKEEEEPNPNYKEVEDPQQESKDDTLAWRESQEEERKTGEEEGEEEEEKEEEGKKDKKIVMEETEEKAGESQEKEASGIQEETTVEPQEVTESMIRLETQITDSQSVTSGIFPKTQRGSKSKLSLQLEDAETDELLRDLSTQLEFLDLDQISPEEQQISSPERQPSGELEEKTDQMPQDELGQERRDLEPENREEGQERTVSDIQSKAGISRESLVSSTTEDILFQKDKSAPVYPLTMTWSFGWNSSLPVYYIREEKQRVLLYVCAHTAIIYNVFRNNQYHLQGHANIISCLCVSEDRRWIATADKGPDCLVIIWDSFTGIPVHTIFDSCPEGSGIRAMAMTHDAKYLATISDAEVQKVCIWKWTLAVETPACTLELPTEYGVQNYVTFNPTNNKELVSNSKTWAIYYAWYEERDTLAHSAPLLTEKTFNKLVGKFSQSVFHLNLTQILSATMEGKLVVWDIHRPPSSASTFLGFPYIKPCKLVHLQKEGITVLTTTDSYIVTGDIKGNIKFYDHTLSIVNWYSHLKLGAIRTLSFSKTPATPPTEKSNYPPDCTLKGDLFVLRNFIIGTSDAAVYHLTTDGTKLEKLFVEPKDAICAISCHPYQPLIAIGSICGMIKVWNYENKQYLFSRVFEKGLGVQSLTYNPEGALLGAGFTEGTVYILDAMSLENESPEPFKYSRTSVTHISFSHDSQYMATADRSFTVAVYMLVVRNGQRVWEYLARLRSHRKSIRSLLFGVYLDSNEPRLLSLGTDRLLIGYDLLRSYKDCLEVLDIHHTDQGCYPTCMVWYPPLTRELFLLICNSGYKVKLFNATTKMCRKTLLGPAYGSPIEQTQVLPVRSMAELQKRYLVFINRDKVGLQILPVDGNPHKTSAIVCHPNGVAGMAVSYDGHYAFTAGGHDRSVVQWKITLSVLEAAVSLGGEDLTPFYGLLSGGREGKFYRELEDYFYYSQLRSQGIDTMETRKVSEHICLSELPFVMRAIGFYPSEEKIDDIFNEIKFGEYVDTGKLIDKINLPDFLKVYLNHKPPFGNTMSGIHKSFEVLGYTNSKGKKAIRREDFLRLLVTKGEHMTEEEMLDCFASLFGLNPEGWKSEPATSSVKGSEICLEEELPDEITAEIFATEILGLTISEYSSQDGQ.

Composition is skewed to basic and acidic residues over residues 1–19 (MSDA…GETE) and 31–59 (KEVE…KTGE). 2 disordered regions span residues 1–144 (MSDA…KLSL) and 167–225 (LDQI…DIQS). The span at 60–69 (EEGEEEEEKE) shows a compositional bias: acidic residues. The segment covering 70–95 (EEGKKDKKIVMEETEEKAGESQEKEA) has biased composition (basic and acidic residues). Over residues 99 to 111 (QEETTVEPQEVTE) the composition is skewed to low complexity. Polar residues-rich tracts occupy residues 118 to 128 (TQITDSQSVTS) and 172 to 182 (PEEQQISSPER). The segment covering 201–220 (GQERRDLEPENREEGQERTV) has biased composition (basic and acidic residues). 14 WD repeats span residues 341–383 (PVHT…IWKW), 391–431 (ACTL…AWYE), 442–481 (LLTE…VWDI), 499–534 (PCKL…FYDH), 537–597 (SIVN…VYHL), 601–641 (GTKL…VWNY), 647–684 (LFSR…ILDA), 694–730 (PFKY…MLVV), 737–780 (WEYL…GYDL), 791–831 (LDIH…LFNA), 837–883 (RKTL…ILPV), 889–927 (KTSA…QWKI), 965–1005 (YFYY…FYPS), and 1025–1065 (GKLI…GYTN).

It is found in the cytoplasm. Its subcellular location is the cytoskeleton. The protein localises to the cilium axoneme. It localises to the cell projection. The protein resides in the cilium. It is found in the flagellum. Functionally, involved in spermatozoa motility. May also regulate cilium motility through its role in the assembly of the axonemal radial spokes. In Pongo abelii (Sumatran orangutan), this protein is Cilia- and flagella-associated protein 251.